The following is a 741-amino-acid chain: Cytosolic phospholipase A2 (741 aa).

The C2 domain occupies 1–116; it reads MSNIIVEHQY…KVAQMEHVTL (116 aa). Positions 1–172 are phospholipid binding; sequence MSNIIVEHQY…IKKLLKMENP (172 aa). 7 residues coordinate Ca(2+): aspartate 34, threonine 35, aspartate 37, asparagine 59, aspartate 87, alanine 88, and asparagine 89. Positions 132-729 constitute a PLA2c domain; sequence VCASTDLRFS…SLSEIENKKF (598 aa). The active-site Nucleophile is serine 223. Positions 406–453 are disordered; sequence TSSSTMEEELEQIKPEHIVGDDSADNEEETQRGGTESADAEDERQRHA. Residues 416–425 are compositionally biased toward basic and acidic residues; that stretch reads EQIKPEHIVG. The residue at position 498 (serine 498) is a Phosphoserine; by MAPK. Catalysis depends on aspartate 540, which acts as the Proton acceptor.

In terms of processing, activated by phosphorylation on a serine residue.

Its subcellular location is the cytoplasm. It is found in the cytoplasmic vesicle. The enzyme catalyses a 1,2-diacyl-sn-glycero-3-phosphocholine + H2O = a 1-acyl-sn-glycero-3-phosphocholine + a fatty acid + H(+). It catalyses the reaction a 1-acyl-sn-glycero-3-phosphocholine + H2O = sn-glycerol 3-phosphocholine + a fatty acid + H(+). Its activity is regulated as follows. Stimulated by agonists such as ATP, EGF, thrombin and bradykinin as well as by cytosolic Ca(2+). In terms of biological role, selectively hydrolyzes arachidonyl phospholipids in the sn-2 position releasing arachidonic acid. Together with its lysophospholipid activity, it is implicated in the initiation of the inflammatory response. The protein is Cytosolic phospholipase A2 (pla2g4a) of Danio rerio (Zebrafish).